Consider the following 98-residue polypeptide: Secreted LysM effector Mgx1LysM (98 aa).

The first 18 residues, 1-18 (MKVTTIIAALLSVAVVDA), serve as a signal peptide directing secretion. Disulfide bonds link cysteine 31-cysteine 89 and cysteine 62-cysteine 97. Residues 37-85 (IPYVVKKGDTLTHIAHDIYKRKVGICDLAYTNHIGKNPNLIYAGQTLLI) form the LysM domain. Chitin contacts are provided by glycine 44, threonine 48, asparagine 75, and isoleucine 77.

Belongs to the secreted LysM effector family. Forms homodimers in a chitin-independent manner through interactions at the N-termini of Mgx1LysM monomers. Homodimers are further polymerized in a chitin-dependent manner.

Its subcellular location is the secreted. It localises to the cell wall. Functionally, secreted effector that enables the plant pathogenic fungus to manipulate host defenses for successful infection. Binds chitin and suppresses the chitin-induced reactive oxygen species (ROS) burst. Chitin-induced polymerization of homodimers forms a contiguous Mg1LysM highly oligomeric super-complexe that is anchored to the chitin in the fungal cell wall to prevent hydrolysis by host chitinases. The protein is Secreted LysM effector Mgx1LysM of Zymoseptoria tritici (strain ST99CH_3D7).